The following is a 519-amino-acid chain: Asteroid homolog 1 (519 aa).

The protein belongs to the asteroid family.

Its subcellular location is the cytoplasm. The protein localises to the mitochondrion. The protein is Asteroid homolog 1 (ast1) of Schizosaccharomyces pombe (strain 972 / ATCC 24843) (Fission yeast).